Consider the following 119-residue polypeptide: Large ribosomal subunit protein bL20 (119 aa).

This sequence belongs to the bacterial ribosomal protein bL20 family.

In terms of biological role, binds directly to 23S ribosomal RNA and is necessary for the in vitro assembly process of the 50S ribosomal subunit. It is not involved in the protein synthesizing functions of that subunit. The protein is Large ribosomal subunit protein bL20 of Nitrosospira multiformis (strain ATCC 25196 / NCIMB 11849 / C 71).